The following is a 510-amino-acid chain: Calmodulin-binding receptor-like cytoplasmic kinase 3 (510 aa).

Positions 1 to 30 (MGGDDLSFTRLVITALFGLLMLLQIKETSA) are cleaved as a signal peptide. Residues 166–178 (VSSFEMSPSSEKI) are compositionally biased toward polar residues. Positions 166-209 (VSSFEMSPSSEKIPQSPFRAPPSPSRVPQSPSRYAMSPRPSRLG) are disordered. Residue Thr214 is modified to Phosphothreonine. Residues 225 to 499 (FADSHQIGEG…MEAVGKQLWA (275 aa)) enclose the Protein kinase domain. Residues 231-239 (IGEGGFGVV) and Lys253 contribute to the ATP site. The interval 240–265 (FKGVLDDGQVVAIKRAKKEHFENLRT) is caM-binding. The Proton acceptor role is filled by Asp350. Ser354 is modified (phosphoserine). Phosphothreonine is present on residues Thr386 and Thr391. At Tyr399 the chain carries Phosphotyrosine.

Belongs to the protein kinase superfamily. Ser/Thr protein kinase family. Interacts with calmodulin (CaM) in a Ca(2+)-dependent manner.

It is found in the cytoplasm. It carries out the reaction L-seryl-[protein] + ATP = O-phospho-L-seryl-[protein] + ADP + H(+). It catalyses the reaction L-threonyl-[protein] + ATP = O-phospho-L-threonyl-[protein] + ADP + H(+). The sequence is that of Calmodulin-binding receptor-like cytoplasmic kinase 3 (CRCK3) from Arabidopsis thaliana (Mouse-ear cress).